The chain runs to 276 residues: Large ribosomal subunit protein uL2 (276 aa).

Residues 224–276 (AMNPIDHPHGGGEGKTSGGRNPVTPWGVPTKGKKTRKRNKSSNKYIKRVSDKG) are disordered. Residues 254–270 (KGKKTRKRNKSSNKYIK) are compositionally biased toward basic residues.

It belongs to the universal ribosomal protein uL2 family. In terms of assembly, part of the 50S ribosomal subunit. Forms a bridge to the 30S subunit in the 70S ribosome.

Its function is as follows. One of the primary rRNA binding proteins. Required for association of the 30S and 50S subunits to form the 70S ribosome, for tRNA binding and peptide bond formation. It has been suggested to have peptidyltransferase activity; this is somewhat controversial. Makes several contacts with the 16S rRNA in the 70S ribosome. The sequence is that of Large ribosomal subunit protein uL2 from Ehrlichia canis (strain Jake).